A 571-amino-acid chain; its full sequence is Glutamate--tRNA ligase (571 aa).

Positions 110–120 (PNPNGPATLGS) match the 'HIGH' region motif.

It belongs to the class-I aminoacyl-tRNA synthetase family. Glutamate--tRNA ligase type 2 subfamily.

It is found in the cytoplasm. The enzyme catalyses tRNA(Glu) + L-glutamate + ATP = L-glutamyl-tRNA(Glu) + AMP + diphosphate. Functionally, catalyzes the attachment of glutamate to tRNA(Glu) in a two-step reaction: glutamate is first activated by ATP to form Glu-AMP and then transferred to the acceptor end of tRNA(Glu). The polypeptide is Glutamate--tRNA ligase (Methanosarcina barkeri (strain Fusaro / DSM 804)).